Here is a 487-residue protein sequence, read N- to C-terminus: UDP-N-acetylmuramate--L-alanine ligase (487 aa).

129–135 provides a ligand contact to ATP; that stretch reads GTHGKTT.

The protein belongs to the MurCDEF family.

It is found in the cytoplasm. The enzyme catalyses UDP-N-acetyl-alpha-D-muramate + L-alanine + ATP = UDP-N-acetyl-alpha-D-muramoyl-L-alanine + ADP + phosphate + H(+). It participates in cell wall biogenesis; peptidoglycan biosynthesis. Functionally, cell wall formation. This is UDP-N-acetylmuramate--L-alanine ligase from Aliivibrio fischeri (strain ATCC 700601 / ES114) (Vibrio fischeri).